The chain runs to 521 residues: Occludin (521 aa).

The tract at residues 1–20 (MSVRPFESPPPYRPDEFKPN) is disordered. Residues 1-66 (MSVRPFESPP…KWTSPPGVIR (66 aa)) lie on the Cytoplasmic side of the membrane. The 208-residue stretch at 60 to 267 (SPPGVIRILS…IIFFAVKTRR (208 aa)) folds into the MARVEL domain. A helical membrane pass occupies residues 67 to 89 (ILSMLIIVMCIAIFACVASTLAW). Topologically, residues 90-133 (DRGYGTGLFGGSLNYPYSGFGYGGGYGGGYGGYGYGYGGYTDPR) are extracellular. The helical transmembrane segment at 134-158 (AAKGFLLAMAAFCFIASLVIFVTSV) threads the bilayer. The Cytoplasmic portion of the chain corresponds to 159–168 (IRSGMSRTRR). The chain crosses the membrane as a helical span at residues 169-193 (YYLIVIIVSAILGIMVFIATIVYIM). The Extracellular portion of the chain corresponds to 194–241 (GVNPTAQASGSMYGSQIYMICNQFYTPGGTGLYVDQYLYHYCVVDPQE). Residues Cys-214 and Cys-235 are joined by a disulfide bond. The chain crosses the membrane as a helical span at residues 242–263 (AIAIVLGFMIIVAFALIIFFAV). Residues 264 to 521 (KTRRKMDRYD…MVGDYDRRKP (258 aa)) are Cytoplasmic-facing. Ser-300 bears the Phosphoserine mark. Residues 300 to 329 (SAGTQDMPPPPSDYAERVDSPMAYSSNGKV) are disordered. Phosphothreonine is present on Thr-303. Residues Ser-311 and Ser-319 each carry the phosphoserine modification. Ser-338 bears the Phosphoserine; by PKC; in vitro mark. At Ser-358 the chain carries Phosphoserine. Positions 361–405 (DFRQPRYSSNGNLETPSKRAPTKGKAGKGKRTDPDHYETDYTTGG) are disordered. Residues 366–375 (RYSSNGNLET) show a composition bias toward polar residues. Tyr-367 is modified (phosphotyrosine). A phosphoserine mark is found at Ser-368 and Ser-369. Residues 380–389 (APTKGKAGKG) show a composition bias toward basic residues. Residues 390 to 399 (KRTDPDHYET) show a composition bias toward basic and acidic residues. Phosphotyrosine is present on residues Tyr-397 and Tyr-401. At Thr-402 the chain carries Phosphothreonine; by PKC/PRKCH. Residue Thr-403 is modified to Phosphothreonine. A Phosphoserine modification is found at Ser-407. The OCEL domain maps to 413 to 521 (EDWVREYPPI…MVGDYDRRKP (109 aa)). The stretch at 424 to 488 (SDQQRQLYKR…EYNRLKQVKG (65 aa)) forms a coiled coil. Position 489 is a phosphoserine (Ser-489).

Belongs to the ELL/occludin family. As to quaternary structure, interacts with TJP1/ZO1. Interacts with VAPA. Interacts with CLDN1, CLDN6, CLDN9, CLDN11, CLDN12 and CLDN17. Interacts with PLSCR1. Interacts with LSR, ILDR1 and ILDR2. Interacts with TJP2/ZO2. Post-translationally, dephosphorylated by PTPRJ. May be phosphorylated by PKC during translocation to cell-cell contacts. Localized at tight junctions of both epithelial and endothelial cells. Highly expressed in the testis, kidney, lung, liver and brain. Not detected in skeletal muscle, spleen and heart.

Its subcellular location is the cell membrane. The protein resides in the cell junction. It localises to the tight junction. In terms of biological role, may play a role in the formation and regulation of the tight junction (TJ) paracellular permeability barrier. The polypeptide is Occludin (Ocln) (Mus musculus (Mouse)).